Reading from the N-terminus, the 185-residue chain is Pyruvate/ketoisovalerate oxidoreductases common subunit gamma (185 aa).

In terms of assembly, heterotetramer of one alpha, one beta, one delta and one gamma chain.

The catalysed reaction is 2 oxidized [2Fe-2S]-[ferredoxin] + pyruvate + CoA = 2 reduced [2Fe-2S]-[ferredoxin] + acetyl-CoA + CO2 + H(+). It catalyses the reaction 3-methyl-2-oxobutanoate + 2 oxidized [2Fe-2S]-[ferredoxin] + CoA = 2-methylpropanoyl-CoA + 2 reduced [2Fe-2S]-[ferredoxin] + CO2 + H(+). This chain is Pyruvate/ketoisovalerate oxidoreductases common subunit gamma (porG), found in Thermococcus litoralis (strain ATCC 51850 / DSM 5473 / JCM 8560 / NS-C).